A 314-amino-acid chain; its full sequence is Porphobilinogen deaminase (314 aa).

C242 bears the S-(dipyrrolylmethanemethyl)cysteine mark.

It belongs to the HMBS family. In terms of assembly, monomer. Dipyrromethane is required as a cofactor.

The catalysed reaction is 4 porphobilinogen + H2O = hydroxymethylbilane + 4 NH4(+). It participates in porphyrin-containing compound metabolism; protoporphyrin-IX biosynthesis; coproporphyrinogen-III from 5-aminolevulinate: step 2/4. Its function is as follows. Tetrapolymerization of the monopyrrole PBG into the hydroxymethylbilane pre-uroporphyrinogen in several discrete steps. This is Porphobilinogen deaminase (hemC) from Buchnera aphidicola subsp. Acyrthosiphon pisum (strain APS) (Acyrthosiphon pisum symbiotic bacterium).